Here is a 662-residue protein sequence, read N- to C-terminus: DNA topoisomerase 4 subunit B (662 aa).

ATP-binding positions include Y20, N60, D87, 129–135, and K359; that span reads GLHGVGI. Residues 439–553 enclose the Toprim domain; sequence TELFIVEGDS…EGHLYLAKPP (115 aa). Mg(2+) is bound by residues E445, D518, and D520.

Belongs to the type II topoisomerase family. ParE type 1 subfamily. In terms of assembly, heterotetramer composed of ParC and ParE. It depends on Mg(2+) as a cofactor. The cofactor is Mn(2+). Requires Ca(2+) as cofactor.

It carries out the reaction ATP-dependent breakage, passage and rejoining of double-stranded DNA.. Topoisomerase IV is essential for chromosome segregation. It relaxes supercoiled DNA. Performs the decatenation events required during the replication of a circular DNA molecule. This chain is DNA topoisomerase 4 subunit B, found in Rickettsia conorii (strain ATCC VR-613 / Malish 7).